The chain runs to 782 residues: MVANNKGLLIAGLLLSVIGAALFVISLALLPSVLNVATNNAIVDAVIVDSFKSQRYNDWAGQKSVDNYFKQYYYLWNLTNPNEVLNGKNCNFEKIGPFNYKYEWNNSKVSFSDDGNLINYIQSKSYKWIEGEDSLNPFTVSTTNFNPAYLGLLSTLSKNSITLGMTAEDLLYTLASAPQTKQFLEYLSSDNFTMIAYFYNGPKYFNQQYQLLLSTINNNLTTTPTIYFLEQWSNSTIIPTNGNSSLWDNMLISYGLDSPSGISLQSALEILNPMNQYSLLNSTNGISYWINAVFNGPNSNSYQILEQELGINQAQLTLVMIWWLKGFNDQYTMSQLLKQCEIESIELLGVCQFITTIPLGYKSISQFNITNLPWLEPIEIPIAMGTNLTISTNEAQSNLFNDSIDDSLLTIHGLGLFLEQMSTNSNNFTKWNLTNNDAMTMIGYFLSYIPNTTGYSIKSVQSFYNTSGLIVTRTANEWLWDCQDDLLDYLGIDQQCSFQQNNTIFKPSTVYTGKKDLSLTNQYQQFQEQSTLTIWNGTVNVTGFVENGQMAPLVQDNLPQSLTIFEENILRPLSLVHSSSSSVMGVSTQRYYLPNQSFPIDPVFNNSINGFANLTGLFNGVPIYVSLWDMYGVPIEYSSLYINGLNQTYENAEIPLDLEPITGNTLYYNLKLQINLQIPSNANSLWFSSLGNWTNIFSPTNSNSFGIFYPSLKIGQTATASTNDINLLKQQFKQIQTVKIAPVVVVSIFGGILLIAGLVMAINGFRKTFYNNNQYNGYNIIN.

Topologically, residues 1 to 7 (MVANNKG) are cytoplasmic. Residues 8–28 (LLIAGLLLSVIGAALFVISLA) form a helical membrane-spanning segment. The Lumenal portion of the chain corresponds to 29 to 739 (LLPSVLNVAT…QQFKQIQTVK (711 aa)). Residues asparagine 77, asparagine 105, asparagine 191, asparagine 219, asparagine 234, asparagine 243, asparagine 281, asparagine 368, asparagine 387, asparagine 401, asparagine 427, asparagine 432, asparagine 451, asparagine 465, asparagine 501, asparagine 536, asparagine 540, asparagine 595, asparagine 605, asparagine 613, asparagine 646, and asparagine 692 are each glycosylated (N-linked (GlcNAc...) asparagine). Residues 740-760 (IAPVVVVSIFGGILLIAGLVM) form a helical membrane-spanning segment. Residues 761-782 (AINGFRKTFYNNNQYNGYNIIN) lie on the Cytoplasmic side of the membrane. Positions 777–781 (GYNII) match the Tyrosine-type lysosomal sorting signal motif.

The protein belongs to the CD36 family. In terms of processing, heavily glycosylated.

It is found in the lysosome membrane. May act as a lysosomal receptor. May be involved role in macropinocytosis and fluid phase exocytosis. This Dictyostelium discoideum (Social amoeba) protein is Lysosome membrane protein 2-C (lmpC).